We begin with the raw amino-acid sequence, 302 residues long: MFFRNLTLFRFPTSLDFSQIDSILPNARLRPVGPLEMTSRGFISPFGREEQEVLNQRQGDFLWLTVGSEDKILPASVVNDLLTRKCSEIEEKKGHPPGGRERKRIKDDLIHELLPRAFVKNSRIDAMLDLRYGYVAVDTASRKAAETVISEIRDLLGSFPALPLNAEISIRSMLTSWIAGEPLPEHLNLGDECEMKDATEGGAIIKCQHQALRCEEIDKHLEVGKQVSKLALILDDHVSFVLGDDLVIRKLKFLDGMLDQLEHSDTDGIRAELDACFALMSAEIRRLFLLLEVPLKLSKANN.

Belongs to the RdgC family.

It is found in the cytoplasm. It localises to the nucleoid. Its function is as follows. May be involved in recombination. In Xylella fastidiosa (strain M12), this protein is Recombination-associated protein RdgC.